The chain runs to 213 residues: BAG family molecular chaperone regulator 6, mitochondrial (213 aa).

Residues 53 to 82 enclose the IQ domain; that stretch reads DDAAAARIQAAFRGHLVRRHAAAVRGADDE. The 78-residue stretch at 75 to 152 folds into the BAG domain; that stretch reads AVRGADDEAT…GLQEVFDAVL (78 aa).

As to quaternary structure, interacts with CAM1-1 under normal conditions. Dissociation of the interaction when calcium-CAM1-1 binding increases under saline-alkaline stress.

It is found in the mitochondrion. Its function is as follows. Co-chaperone that regulates stress responses. Acts as a negative regulator of saline-alkaline stress tolerance. May participate in stress response through regulating the homeostasis of iron, manganese and zinc ions. The polypeptide is BAG family molecular chaperone regulator 6, mitochondrial (Oryza sativa subsp. japonica (Rice)).